A 73-amino-acid chain; its full sequence is Disintegrin barbourin (73 aa).

Residues 1–73 (EAGEECDCGS…ADCPRNGLYG (73 aa)) form the Disintegrin domain. 6 disulfides stabilise this stretch: Cys6–Cys21, Cys8–Cys16, Cys15–Cys38, Cys29–Cys35, Cys34–Cys59, and Cys47–Cys66. Positions 51 to 53 (KGD) match the Cell attachment site; atypical (KGD) motif.

It belongs to the venom metalloproteinase (M12B) family. P-II subfamily. P-IIa sub-subfamily. As to quaternary structure, monomer. In terms of tissue distribution, expressed by the venom gland.

It is found in the secreted. In terms of biological role, inhibitor of ligand binding to the integrins alpha-IIb/beta-3 (ITGA2B/ITGB3). Competition with fibrinogen for the RGD recognition sites on the alpha-IIb/beta-3 integrin results in the inhibition of platelet aggregation induced by ADP, thrombin, platelet-activating factor and collagen. In Sistrurus miliarius barbouri (Dusky pigmy rattlesnake), this protein is Disintegrin barbourin.